The primary structure comprises 354 residues: Phenylalanine--tRNA ligase alpha subunit (354 aa).

Glu279 serves as a coordination point for Mg(2+).

This sequence belongs to the class-II aminoacyl-tRNA synthetase family. Phe-tRNA synthetase alpha subunit type 1 subfamily. In terms of assembly, tetramer of two alpha and two beta subunits. It depends on Mg(2+) as a cofactor.

It is found in the cytoplasm. It carries out the reaction tRNA(Phe) + L-phenylalanine + ATP = L-phenylalanyl-tRNA(Phe) + AMP + diphosphate + H(+). The protein is Phenylalanine--tRNA ligase alpha subunit of Cupriavidus pinatubonensis (strain JMP 134 / LMG 1197) (Cupriavidus necator (strain JMP 134)).